The following is a 512-amino-acid chain: D-alanine--D-alanyl carrier protein ligase (512 aa).

152–153 (TS) is an ATP binding site. Asp-199 serves as a coordination point for D-alanine. An ATP-binding site is contributed by 294-299 (NAYGPT). Val-303 is a D-alanine binding site. ATP-binding positions include Asp-385, 397-400 (YGGR), and Lys-499. Lys-499 contributes to the D-alanine binding site.

Belongs to the ATP-dependent AMP-binding enzyme family. DltA subfamily.

It localises to the cytoplasm. The enzyme catalyses holo-[D-alanyl-carrier protein] + D-alanine + ATP = D-alanyl-[D-alanyl-carrier protein] + AMP + diphosphate. It participates in cell wall biogenesis; lipoteichoic acid biosynthesis. Functionally, catalyzes the first step in the D-alanylation of lipoteichoic acid (LTA), the activation of D-alanine and its transfer onto the D-alanyl carrier protein (Dcp) DltC. In an ATP-dependent two-step reaction, forms a high energy D-alanyl-AMP intermediate, followed by transfer of the D-alanyl residue as a thiol ester to the phosphopantheinyl prosthetic group of the Dcp. D-alanylation of LTA plays an important role in modulating the properties of the cell wall in Gram-positive bacteria, influencing the net charge of the cell wall. In Streptococcus pyogenes serotype M3 (strain SSI-1), this protein is D-alanine--D-alanyl carrier protein ligase.